The sequence spans 337 residues: Beta-hexosaminidase (337 aa).

Residues aspartate 62, arginine 70, arginine 133, and 163 to 164 (KH) each bind substrate. The Proton donor/acceptor role is filled by histidine 176. Catalysis depends on aspartate 248, which acts as the Nucleophile.

Belongs to the glycosyl hydrolase 3 family. NagZ subfamily.

It localises to the cytoplasm. It catalyses the reaction Hydrolysis of terminal non-reducing N-acetyl-D-hexosamine residues in N-acetyl-beta-D-hexosaminides.. It functions in the pathway cell wall biogenesis; peptidoglycan recycling. Functionally, plays a role in peptidoglycan recycling by cleaving the terminal beta-1,4-linked N-acetylglucosamine (GlcNAc) from peptide-linked peptidoglycan fragments, giving rise to free GlcNAc, anhydro-N-acetylmuramic acid and anhydro-N-acetylmuramic acid-linked peptides. This Psychromonas ingrahamii (strain DSM 17664 / CCUG 51855 / 37) protein is Beta-hexosaminidase.